Consider the following 314-residue polypeptide: Phospho-N-acetylmuramoyl-pentapeptide-transferase (314 aa).

Helical transmembrane passes span 4-24 (LIFY…PIFI), 52-72 (TMGG…TYFI), 77-97 (LFLI…LDDY), 111-131 (IQKL…ISIF), 146-166 (LDLK…MSNA), 169-189 (LTDG…LFTA), 191-211 (IAGI…AYLF), 219-239 (IFMG…LALY), 242-262 (VELF…SVII), and 294-314 (IVLI…GGVL).

Belongs to the glycosyltransferase 4 family. MraY subfamily. Mg(2+) is required as a cofactor.

It is found in the cell inner membrane. It carries out the reaction UDP-N-acetyl-alpha-D-muramoyl-L-alanyl-gamma-D-glutamyl-meso-2,6-diaminopimeloyl-D-alanyl-D-alanine + di-trans,octa-cis-undecaprenyl phosphate = di-trans,octa-cis-undecaprenyl diphospho-N-acetyl-alpha-D-muramoyl-L-alanyl-D-glutamyl-meso-2,6-diaminopimeloyl-D-alanyl-D-alanine + UMP. The protein operates within cell wall biogenesis; peptidoglycan biosynthesis. Catalyzes the initial step of the lipid cycle reactions in the biosynthesis of the cell wall peptidoglycan: transfers peptidoglycan precursor phospho-MurNAc-pentapeptide from UDP-MurNAc-pentapeptide onto the lipid carrier undecaprenyl phosphate, yielding undecaprenyl-pyrophosphoryl-MurNAc-pentapeptide, known as lipid I. This Petrotoga mobilis (strain DSM 10674 / SJ95) protein is Phospho-N-acetylmuramoyl-pentapeptide-transferase.